The chain runs to 243 residues: Uridylate kinase (243 aa).

ATP is bound at residue 15–18 (KLSG). Positions 23 to 28 (GEEGFG) are involved in allosteric activation by GTP. Residue Gly57 coordinates UMP. Residues Gly58 and Arg62 each coordinate ATP. Residues Asp77 and 138-145 (TGNPFFTT) each bind UMP. ATP contacts are provided by Thr165, Phe171, and Asp174.

This sequence belongs to the UMP kinase family. In terms of assembly, homohexamer.

The protein resides in the cytoplasm. It catalyses the reaction UMP + ATP = UDP + ADP. It participates in pyrimidine metabolism; CTP biosynthesis via de novo pathway; UDP from UMP (UMPK route): step 1/1. Allosterically activated by GTP. Inhibited by UTP. In terms of biological role, catalyzes the reversible phosphorylation of UMP to UDP. The chain is Uridylate kinase from Aliivibrio fischeri (strain ATCC 700601 / ES114) (Vibrio fischeri).